The primary structure comprises 148 residues: uncharacterized protein (148 aa).

The interval 1–108 (MGRAGPRSTA…PSRLRGKRSL (108 aa)) is disordered. Residues 22-42 (RRPRPWQKPTSPRRLHRRRPR) show a composition bias toward basic residues. A compositionally biased stretch (polar residues) spans 88 to 97 (DTSASNPSQR).

This is an uncharacterized protein from Homo sapiens (Human).